A 516-amino-acid chain; its full sequence is HMG box-containing protein 1 (516 aa).

The disordered stretch occupies residues 150-182 (ARPPPVSSSSKSGPAFPHDHWKEETPVRHERAN). Residues 156–165 (SSSSKSGPAF) are compositionally biased toward low complexity. Over residues 166 to 182 (PHDHWKEETPVRHERAN) the composition is skewed to basic and acidic residues. The AXH domain occupies 203–345 (WCNSWPSTIW…PPGHPDAINF (143 aa)). The HMG box DNA-binding region spans 436–504 (CKRPMNAFML…EQKRLNPDCW (69 aa)).

In terms of assembly, binds TCF4. Binds RB1. Binds the second PAH repeat of SIN3A. Post-translationally, ubiquitinated by the CTLH E3 ubiquitin-protein ligase complex, leading to subsequent proteasomal degradation.

The protein localises to the nucleus. In terms of biological role, transcriptional repressor that binds to the promoter region of target genes. Plays a role in the regulation of the cell cycle and of the Wnt pathway. Binds preferentially to the sequence 5'-TTCATTCATTCA-3'. Binding to the histone H1.0 promoter is enhanced by interaction with RB1. Disrupts the interaction between DNA and TCF4. The sequence is that of HMG box-containing protein 1 (Hbp1) from Mus musculus (Mouse).